Reading from the N-terminus, the 546-residue chain is CTP synthase (546 aa).

The interval Met-1–Ile-269 is amidoligase domain. Ser-17 provides a ligand contact to CTP. Ser-17 contributes to the UTP binding site. Residues Ser-18–Leu-23 and Asp-75 contribute to the ATP site. Mg(2+)-binding residues include Asp-75 and Glu-143. CTP is bound by residues Asp-150–Glu-152, Lys-190–Gln-195, and Lys-226. Residues Lys-190–Gln-195 and Lys-226 each bind UTP. Residues Arg-295 to Ala-537 enclose the Glutamine amidotransferase type-1 domain. Gly-357 serves as a coordination point for L-glutamine. The Nucleophile; for glutamine hydrolysis role is filled by Cys-384. Residues Leu-385 to Gln-388, Glu-408, and Arg-465 contribute to the L-glutamine site. Catalysis depends on residues His-510 and Glu-512.

The protein belongs to the CTP synthase family. As to quaternary structure, homotetramer.

It carries out the reaction UTP + L-glutamine + ATP + H2O = CTP + L-glutamate + ADP + phosphate + 2 H(+). The enzyme catalyses L-glutamine + H2O = L-glutamate + NH4(+). It catalyses the reaction UTP + NH4(+) + ATP = CTP + ADP + phosphate + 2 H(+). It participates in pyrimidine metabolism; CTP biosynthesis via de novo pathway; CTP from UDP: step 2/2. Its activity is regulated as follows. Allosterically activated by GTP, when glutamine is the substrate; GTP has no effect on the reaction when ammonia is the substrate. The allosteric effector GTP functions by stabilizing the protein conformation that binds the tetrahedral intermediate(s) formed during glutamine hydrolysis. Inhibited by the product CTP, via allosteric rather than competitive inhibition. Its function is as follows. Catalyzes the ATP-dependent amination of UTP to CTP with either L-glutamine or ammonia as the source of nitrogen. Regulates intracellular CTP levels through interactions with the four ribonucleotide triphosphates. The protein is CTP synthase of Myxococcus xanthus (strain DK1622).